The sequence spans 400 residues: Acetate kinase (400 aa).

Asn10 provides a ligand contact to Mg(2+). Lys17 serves as a coordination point for ATP. Position 91 (Arg91) interacts with substrate. Catalysis depends on Asp150, which acts as the Proton donor/acceptor. Residues 210-214 (HLGNG), 285-287 (DCR), and 333-337 (GIGEN) each bind ATP. Glu387 provides a ligand contact to Mg(2+).

It belongs to the acetokinase family. As to quaternary structure, homodimer. Requires Mg(2+) as cofactor. It depends on Mn(2+) as a cofactor.

It localises to the cytoplasm. The catalysed reaction is acetate + ATP = acetyl phosphate + ADP. It functions in the pathway metabolic intermediate biosynthesis; acetyl-CoA biosynthesis; acetyl-CoA from acetate: step 1/2. Functionally, catalyzes the formation of acetyl phosphate from acetate and ATP. Can also catalyze the reverse reaction. This chain is Acetate kinase, found in Proteus mirabilis (strain HI4320).